We begin with the raw amino-acid sequence, 253 residues long: Small ribosomal subunit protein uS2 (253 aa).

Serine 2 is modified (N-acetylserine). Positions 212 to 253 (QQAAEEAAAGEEDDEAKEEVAAEEQTEAADWAEGQSEEVASW) are disordered. Residues 219-238 (AAGEEDDEAKEEVAAEEQTE) show a composition bias toward acidic residues.

It belongs to the universal ribosomal protein uS2 family. In terms of assembly, component of the small ribosomal subunit. Mature ribosomes consist of a small (40S) and a large (60S) subunit. The 40S subunit contains about 33 different proteins and 1 molecule of RNA (18S). The 60S subunit contains about 49 different proteins and 3 molecules of RNA (25S, 5.8S and 5S). Interacts with RPS21.

It localises to the cytoplasm. Functionally, required for the assembly and/or stability of the 40S ribosomal subunit. Required for the processing of the 20S rRNA-precursor to mature 18S rRNA in a late step of the maturation of 40S ribosomal subunits. This Eremothecium gossypii (strain ATCC 10895 / CBS 109.51 / FGSC 9923 / NRRL Y-1056) (Yeast) protein is Small ribosomal subunit protein uS2.